A 1200-amino-acid polypeptide reads, in one-letter code: Chromosome partition protein Smc (1200 aa).

32-39 (PNGCGKSN) provides a ligand contact to ATP. Coiled-coil stretches lie at residues 171–219 (VTKY…AEKY) and 252–342 (LENL…MSEA). The SMC hinge domain maps to 528–644 (QGIFGLVADV…QDVATARAWT (117 aa)). Coiled-coil stretches lie at residues 679–706 (ALQKKREIAELATEVARVEERYNEILTR) and 735–762 (LASQEKDLHKAGEDLARVRERVRALEVE). The segment at 763–795 (EGQLTQSHQALEHEEEASRGEVAHGQADREGRE) is disordered. Residues 772–795 (ALEHEEEASRGEVAHGQADREGRE) show a composition bias toward basic and acidic residues. A coiled-coil region spans residues 1002–1039 (HAELSKRYDFLTAQKKDLQSSIEQLKEAIQRIDATSRE).

The protein belongs to the SMC family. As to quaternary structure, homodimer. Probably forms the Structural Maintenance of Chromosome (SMC) condensin-like complex with ScpA and ScpB.

The protein resides in the cytoplasm. In terms of biological role, a conditionally essential component of the chromosome segregation machinery. Required for chromosome condensation and partitioning. Important for positioning of ParB-parS complexes (ori of replication) and of the ter replication site, as well as for segration of the ParB-parS complex and thus chromosome segregation. May act via the formation of a condensin-like complex containing Smc, ScpA and ScpB that pulls DNA away from mid-cell into both cell halves. The sequence is that of Chromosome partition protein Smc from Myxococcus xanthus (strain DK1622).